The chain runs to 219 residues: 7-cyano-7-deazaguanine synthase (219 aa).

10 to 20 (FSGGQDSTTCL) lines the ATP pocket. The Zn(2+) site is built by Cys-188, Cys-196, Cys-199, and Cys-202.

It belongs to the QueC family. Requires Zn(2+) as cofactor.

The catalysed reaction is 7-carboxy-7-deazaguanine + NH4(+) + ATP = 7-cyano-7-deazaguanine + ADP + phosphate + H2O + H(+). It participates in purine metabolism; 7-cyano-7-deazaguanine biosynthesis. Catalyzes the ATP-dependent conversion of 7-carboxy-7-deazaguanine (CDG) to 7-cyano-7-deazaguanine (preQ(0)). The protein is 7-cyano-7-deazaguanine synthase of Neisseria gonorrhoeae (strain NCCP11945).